We begin with the raw amino-acid sequence, 570 residues long: MKMSNMLVGTLREVPAEAEIESHKLMLRAGLMRKMAAGIYNYMPLGLKVIENVKNIVREEMNNAGAQEFLASALIPAELWQESGRWDAYGAEMFRLKDRHNRDFCLGPTHEEVFTDIVRNEIKSYKQLPLNLYQIQTKYRDERRPRFGVMRSREFIMKDGYSFDKDQEGLDLAYEKMRKAYVNIFNRCGLDAKAVAADSGAIGGSGSAEFMVKSEVGEDDVVFCTACDYAANIEKAPSTPEHAEKEELMEVEKVETPAVKSIEDLAKFFECSPKKIAKTLIFQADDKVVAVVLRGDREANEVKIANAIGEVIELEMASEEAVKEATGAAVGFAGPMGIKVDMLLVDQEVANMYNFIIGANETDMHLKNVNYGRDFEGIVGDFRNVTIGEKCPECGKEITISRGTEVGHIFKLGTKYSESMGATFIDEDGKAKPFIMGCYGIGVTRTVASIIEQHNDENGIIWPLEVAPYHVSVIPANVKNEEQATKAEEIYNELRKMGVEALLDDRKERAGVKFKDSELMGIPMRITVGKMIGEGQVEFKLRNGGEVETLSIEEVYNRVREEFERANLSL.

This sequence belongs to the class-II aminoacyl-tRNA synthetase family. ProS type 1 subfamily. Homodimer.

It localises to the cytoplasm. It catalyses the reaction tRNA(Pro) + L-proline + ATP = L-prolyl-tRNA(Pro) + AMP + diphosphate. Catalyzes the attachment of proline to tRNA(Pro) in a two-step reaction: proline is first activated by ATP to form Pro-AMP and then transferred to the acceptor end of tRNA(Pro). As ProRS can inadvertently accommodate and process non-cognate amino acids such as alanine and cysteine, to avoid such errors it has two additional distinct editing activities against alanine. One activity is designated as 'pretransfer' editing and involves the tRNA(Pro)-independent hydrolysis of activated Ala-AMP. The other activity is designated 'posttransfer' editing and involves deacylation of mischarged Ala-tRNA(Pro). The misacylated Cys-tRNA(Pro) is not edited by ProRS. The sequence is that of Proline--tRNA ligase from Clostridium perfringens (strain ATCC 13124 / DSM 756 / JCM 1290 / NCIMB 6125 / NCTC 8237 / Type A).